We begin with the raw amino-acid sequence, 321 residues long: MLHAGLVSAPYITVDDTGARHARDSFHTTQIGAEHFTAFRTTASKSRLNFLSLLRGSYQDYVLNDAAFDYLDGRRADPALVAKIRSHEPRRFCDQVPFLEYLAGKGIDIFDRQAVRVLAEAGIWGSIRHHGLLGDTVIVSDDAGQFRVGNHALCWVYAERLLQKLMPATPRQVRQVEAVRDLVWRFYRALKSVKRKPPPGLAAAFRKRFARIFSLRTGYEDLDKLLARLSRRKDELLKVLERPDIPLHTNASENDLRSFVTKRKISGGTMSRDGRVARDTMLGLMKTCKKLGLSFWHYLGDRLGLDGQAIAPLAALVAAKA.

This is an uncharacterized protein from Sinorhizobium fredii (strain NBRC 101917 / NGR234).